The following is a 738-amino-acid chain: Polyphosphate kinase (738 aa).

Residues Met1–Leu48 form a disordered region. Residues Ala19–Asp30 are compositionally biased toward basic and acidic residues. Asn91 is an ATP binding site. Arg427 and Arg457 together coordinate Mg(2+). The active-site Phosphohistidine intermediate is His487. Tyr520, Arg620, and His648 together coordinate ATP.

This sequence belongs to the polyphosphate kinase 1 (PPK1) family. Mg(2+) serves as cofactor. Post-translationally, an intermediate of this reaction is the autophosphorylated ppk in which a phosphate is covalently linked to a histidine residue through a N-P bond.

It carries out the reaction [phosphate](n) + ATP = [phosphate](n+1) + ADP. Catalyzes the reversible transfer of the terminal phosphate of ATP to form a long-chain polyphosphate (polyP). The protein is Polyphosphate kinase of Mycobacterium marinum (strain ATCC BAA-535 / M).